We begin with the raw amino-acid sequence, 1064 residues long: Serine protease inhibitor Kazal-type 5 (1064 aa).

An N-terminal signal peptide occupies residues 1 to 22 (MKIATVSVLLPLALCLIQDAAS). The 39-residue stretch at 28-66 (EMCHEFQAFMKNGKLFCPQDKKFFQSLDGIMFINKCATC) folds into the Kazal-like 1; atypical domain. 21 cysteine pairs are disulfide-bonded: cysteine 30-cysteine 66, cysteine 44-cysteine 63, cysteine 97-cysteine 133, cysteine 111-cysteine 130, cysteine 119-cysteine 151, cysteine 161-cysteine 197, cysteine 175-cysteine 194, cysteine 225-cysteine 261, cysteine 239-cysteine 258, cysteine 297-cysteine 333, cysteine 311-cysteine 330, cysteine 367-cysteine 403, cysteine 381-cysteine 400, cysteine 437-cysteine 473, cysteine 451-cysteine 470, cysteine 496-cysteine 532, cysteine 510-cysteine 529, cysteine 567-cysteine 603, cysteine 581-cysteine 600, cysteine 632-cysteine 668, and cysteine 646-cysteine 665. 14 consecutive Kazal-like domains span residues 91 to 153 (APTE…ECKS), 155 to 216 (NPEQ…ETRI), 219 to 285 (NAEK…KAEE), 291 to 352 (REIV…ARAR), 361 to 423 (TSYA…KSRN), 431 to 489 (ASFE…KAKR), 490 to 551 (EAAK…EEKG), 561 to 622 (EAVQ…PRAK), 626 to 688 (EAEK…EDQR), 701 to 757 (GNTQ…KNEY), 768 to 830 (ESGK…EDRS), 843 to 905 (NDKE…EKSS), 910 to 971 (NNAK…EKPS), and 987 to 1048 (SLDS…KCEE). Over residues 676–688 (NEERKRKEEEDQR) the composition is skewed to basic and acidic residues. The segment at 676-705 (NEERKRKEEEDQRNAAGHGSSGGGGGNTQD) is disordered. Cystine bridges form between cysteine 707/cysteine 743, cysteine 721/cysteine 740, cysteine 774/cysteine 810, cysteine 788/cysteine 807, cysteine 849/cysteine 885, and cysteine 863/cysteine 882. Residues 751–775 (AERKNEYSRSRSNGTGSESGKDTCD) form a disordered region. Positions 818–849 (AAEKKKKEDEDRSNTGERSNTGERSNDKEDLC) are disordered. The segment covering 895–905 (ERKKKDEEKSS) has biased composition (basic and acidic residues). The interval 895–915 (ERKKKDEEKSSSKPSNNAKDE) is disordered. Cystine bridges form between cysteine 916/cysteine 952 and cysteine 930/cysteine 949. Basic and acidic residues predominate over residues 967-977 (QEKPSHVRASQ). Residues 967-987 (QEKPSHVRASQEEDSPDSFSS) form a disordered region. Intrachain disulfides connect cysteine 993-cysteine 1028, cysteine 1006-cysteine 1025, and cysteine 1014-cysteine 1046. The disordered stretch occupies residues 1041 to 1064 (RSTGKCEESSTPGTTAASMPPSDE).

In terms of processing, proteolytically processed by furin in individual domains (D1, D5, D6, D8 through D11, and D9 through D15) exhibiting various inhibitory potentials for multiple proteases. Highly expressed in the thymus and stratum corneum. Also found in the oral mucosa, parathyroid gland, Bartholin's glands, tonsils, and vaginal epithelium. Very low levels are detected in lung, kidney, and prostate.

Its subcellular location is the secreted. Functionally, serine protease inhibitor, probably important for the anti-inflammatory and/or antimicrobial protection of mucous epithelia. Contribute to the integrity and protective barrier function of the skin by regulating the activity of defense-activating and desquamation-involved proteases. Inhibits KLK5, it's major target, in a pH-dependent manner. Inhibits KLK7, KLK14 CASP14, and trypsin. This Homo sapiens (Human) protein is Serine protease inhibitor Kazal-type 5 (SPINK5).